The sequence spans 80 residues: Exodeoxyribonuclease 7 small subunit (80 aa).

This sequence belongs to the XseB family. Heterooligomer composed of large and small subunits.

The protein resides in the cytoplasm. The enzyme catalyses Exonucleolytic cleavage in either 5'- to 3'- or 3'- to 5'-direction to yield nucleoside 5'-phosphates.. In terms of biological role, bidirectionally degrades single-stranded DNA into large acid-insoluble oligonucleotides, which are then degraded further into small acid-soluble oligonucleotides. In Pseudomonas paraeruginosa (strain DSM 24068 / PA7) (Pseudomonas aeruginosa (strain PA7)), this protein is Exodeoxyribonuclease 7 small subunit.